Consider the following 547-residue polypeptide: Chaperonin GroEL 2 (547 aa).

ATP-binding positions include 30-33, lysine 51, 87-91, glycine 415, 479-481, and aspartate 495; these read TLGP, DGTTT, and NAA. Residues 525 to 547 form a disordered region; that stretch reads PKEESAAPAGGGMGGMGGMGGMM. The segment covering 533–547 has biased composition (gly residues); it reads AGGGMGGMGGMGGMM.

This sequence belongs to the chaperonin (HSP60) family. As to quaternary structure, forms a cylinder of 14 subunits composed of two heptameric rings stacked back-to-back. Interacts with the co-chaperonin GroES.

It localises to the cytoplasm. It carries out the reaction ATP + H2O + a folded polypeptide = ADP + phosphate + an unfolded polypeptide.. Functionally, together with its co-chaperonin GroES, plays an essential role in assisting protein folding. The GroEL-GroES system forms a nano-cage that allows encapsulation of the non-native substrate proteins and provides a physical environment optimized to promote and accelerate protein folding. The sequence is that of Chaperonin GroEL 2 from Anaeromyxobacter dehalogenans (strain 2CP-C).